The sequence spans 360 residues: Cyclin-dependent kinase 10 (360 aa).

The 285-residue stretch at Phe39–Phe323 folds into the Protein kinase domain. Residues Ile45–Val53 and Lys68 each bind ATP. The active-site Proton acceptor is the Asp163. Position 196 is a phosphothreonine (Thr196). Residues Leu334–Pro360 are disordered.

Belongs to the protein kinase superfamily. CMGC Ser/Thr protein kinase family. CDC2/CDKX subfamily. Heterodimer with CCNQ, the interaction is required for kinase activity. Interacts with ETS2. Interacts with PRK2.

Its subcellular location is the cytoplasm. The protein localises to the cytoskeleton. It is found in the cilium basal body. It catalyses the reaction L-seryl-[protein] + ATP = O-phospho-L-seryl-[protein] + ADP + H(+). The enzyme catalyses L-threonyl-[protein] + ATP = O-phospho-L-threonyl-[protein] + ADP + H(+). Its function is as follows. Cyclin-dependent kinase that phosphorylates the transcription factor ETS2 (in vitro) and positively controls its proteasomal degradation (in cells). Involved in the regulation of actin cytoskeleton organization through the phosphorylation of actin dynamics regulators such as PKN2. Is a negative regulator of ciliogenesis through phosphorylation of PKN2 and promotion of RhoA signaling. This Homo sapiens (Human) protein is Cyclin-dependent kinase 10 (CDK10).